The sequence spans 449 residues: UDP-N-acetylmuramoylalanine--D-glutamate ligase (449 aa).

118 to 124 serves as a coordination point for ATP; the sequence is GTNGKTT.

Belongs to the MurCDEF family.

It localises to the cytoplasm. The catalysed reaction is UDP-N-acetyl-alpha-D-muramoyl-L-alanine + D-glutamate + ATP = UDP-N-acetyl-alpha-D-muramoyl-L-alanyl-D-glutamate + ADP + phosphate + H(+). It functions in the pathway cell wall biogenesis; peptidoglycan biosynthesis. In terms of biological role, cell wall formation. Catalyzes the addition of glutamate to the nucleotide precursor UDP-N-acetylmuramoyl-L-alanine (UMA). The protein is UDP-N-acetylmuramoylalanine--D-glutamate ligase of Staphylococcus epidermidis (strain ATCC 35984 / DSM 28319 / BCRC 17069 / CCUG 31568 / BM 3577 / RP62A).